Here is a 93-residue protein sequence, read N- to C-terminus: ATP-dependent Clp protease adapter protein ClpS (93 aa).

The protein belongs to the ClpS family. In terms of assembly, binds to the N-terminal domain of the chaperone ClpA.

Functionally, involved in the modulation of the specificity of the ClpAP-mediated ATP-dependent protein degradation. This Gloeobacter violaceus (strain ATCC 29082 / PCC 7421) protein is ATP-dependent Clp protease adapter protein ClpS.